A 202-amino-acid chain; its full sequence is dTTP/UTP pyrophosphatase (202 aa).

Catalysis depends on aspartate 71, which acts as the Proton acceptor.

This sequence belongs to the Maf family. YhdE subfamily. Requires a divalent metal cation as cofactor.

It localises to the cytoplasm. It carries out the reaction dTTP + H2O = dTMP + diphosphate + H(+). The catalysed reaction is UTP + H2O = UMP + diphosphate + H(+). In terms of biological role, nucleoside triphosphate pyrophosphatase that hydrolyzes dTTP and UTP. May have a dual role in cell division arrest and in preventing the incorporation of modified nucleotides into cellular nucleic acids. In Zymomonas mobilis subsp. mobilis (strain ATCC 31821 / ZM4 / CP4), this protein is dTTP/UTP pyrophosphatase.